The chain runs to 606 residues: WD repeat-containing protein 1 (606 aa).

WD repeat units follow at residues 4-45 (EIKK…LRNI), 48-87 (PAIADIYTEHAHQVVVAKYAPSGFYIASGDISGKLRIWDT), 93-135 (LLKY…LWDT), 138-176 (SVGEITGHNKVINSVDIKQTRPYRLATGSDDNCAAFFEG), 180-218 (KFKFTIGDHSRFVNCVRFSPDGNRFATASADGQIFIYDG), 224-263 (VCALGESKAHDGGIYAISWSPDSTHLLSASGDKTSKIWDV), 270-306 (STFPMGSNVLDQQLGCLWQKDHLLSISLSGYINYLDK), 311-351 (KPLR…YWDS), 358-408 (SFSG…KLDV), 432-474 (LKDQ…VYSI), 480-518 (KDEGKLLEAKGPVTDVAYSHDGAFLAVCDASKVVTVFSV), 523-561 (SENNVFYGHHAKIVCLAWSPDNEHFASGGMDMMVYVWTL), and 566-604 (TKVKIQDAHRLHHVSSLAWLDEHTLVTTSHDASVKEWTI). 4 positions are modified to N6-acetyllysine: K28, K81, K95, and K115. Y238 is modified (phosphotyrosine). K480 is modified (N6-acetyllysine).

It belongs to the WD repeat AIP1 family.

The protein localises to the cytoplasm. The protein resides in the cytoskeleton. Its subcellular location is the cell projection. It is found in the podosome. In terms of biological role, induces disassembly of actin filaments in conjunction with ADF/cofilin family proteins. Enhances cofilin-mediated actin severing. Involved in cytokinesis. Involved in chemotactic cell migration by restricting lamellipodial membrane protrusions. Involved in myocardium sarcomere organization. Required for cardiomyocyte growth at the postnatal and maintenance at the adult stage. Involved in neutrophil actin dynamics and migration. Involved in megakaryocyte maturation and platelet shedding. Required for the establishment of planar cell polarity (PCP) during follicular epithelium development and for cell shape changes during PCP; the function seems to implicate cooperation with CFL1 and/or DSTN/ADF. Involved in the generation/maintenance of cortical tension. Involved in assembly and maintenance of epithelial apical cell junctions and plays a role in the organization of the perijunctional actomyosin belt. The protein is WD repeat-containing protein 1 (Wdr1) of Mus musculus (Mouse).